Consider the following 289-residue polypeptide: Bis(5'-nucleosyl)-tetraphosphatase, symmetrical (289 aa).

Belongs to the Ap4A hydrolase family.

It catalyses the reaction P(1),P(4)-bis(5'-adenosyl) tetraphosphate + H2O = 2 ADP + 2 H(+). Its function is as follows. Hydrolyzes diadenosine 5',5'''-P1,P4-tetraphosphate to yield ADP. The polypeptide is Bis(5'-nucleosyl)-tetraphosphatase, symmetrical (Yersinia pseudotuberculosis serotype O:1b (strain IP 31758)).